A 213-amino-acid chain; its full sequence is Iron sulfur cluster assembly protein 1, mitochondrial (213 aa).

This sequence belongs to the NifU family. As to quaternary structure, component of the core Fe-S cluster (ISC) assembly machinery. [2Fe-2S] cluster is required as a cofactor.

Its subcellular location is the mitochondrion matrix. It participates in cofactor biosynthesis; iron-sulfur cluster biosynthesis. Scaffold protein for the de novo synthesis of iron-sulfur (Fe-S) clusters within mitochondria, which is required for maturation of both mitochondrial and cytoplasmic [2Fe-2S] and [4Fe-4S] proteins. First, a [2Fe-2S] cluster is transiently assembled on the scaffold protein ISU1. In a second step, the cluster is released from ISU1, transferred to a glutaredoxin, followed by the formation of mitochondrial [2Fe-2S] proteins, the synthesis of [4Fe-4S] clusters and their target-specific insertion into the recipient apoproteins. Cluster assembly on ISU1 depends on the function of the cysteine desulfurase complex NFS1-ISD11, which serves as the sulfur donor for cluster synthesis, the iron-binding protein frataxin as the putative iron donor, and the electron transfer chain comprised of ferredoxin reductase and ferredoxin, which receive their electrons from NADH. The polypeptide is Iron sulfur cluster assembly protein 1, mitochondrial (ISU1) (Candida glabrata (strain ATCC 2001 / BCRC 20586 / JCM 3761 / NBRC 0622 / NRRL Y-65 / CBS 138) (Yeast)).